A 324-amino-acid polypeptide reads, in one-letter code: Protein SRC2 homolog (324 aa).

The 111-residue stretch at 1-111 (MECRSLDLTI…LDQNKGDEEK (111 aa)) folds into the C2 domain. At 1–279 (MECRSLDLTI…KPQKPKKHGK (279 aa)) the chain is on the cytoplasmic side. Positions 141–281 (GSSSGPHAPV…QKPKKHGKAG (141 aa)) are disordered. 2 stretches are compositionally biased toward low complexity: residues 166 to 175 (YPPGHGAPSA) and 246 to 269 (PYGY…QAHG). Basic residues predominate over residues 270-279 (KPQKPKKHGK). A helical; Signal-anchor transmembrane segment spans residues 280 to 300 (AGAGMGLGLGLGAGLLGGLLV). Residues 301–324 (GEAVSDIADMGDMGDMGDMGGFDF) lie on the Lumenal side of the membrane.

As to quaternary structure, interacts with RBOHF (via N-terminus).

The protein resides in the endoplasmic reticulum membrane. It is found in the protein storage vacuole membrane. The protein localises to the cell membrane. Its function is as follows. May act as an activator of the calcium-dependent activation of RBOHF that mediates reactive oxygen species (ROS) production and may play a role in cold responses. The chain is Protein SRC2 homolog from Arabidopsis thaliana (Mouse-ear cress).